A 247-amino-acid chain; its full sequence is Syntaxin-like protein fsv1 (247 aa).

A coiled-coil region spans residues 27–94 (NPDEEIESSL…FEKQRRASSI (68 aa)). Positions 88 to 130 (QRRASSIPADGTSAFSANPQVASTNNKLTPLPSLQKTTSSSEG) are disordered. A compositionally biased stretch (polar residues) spans 100 to 130 (SAFSANPQVASTNNKLTPLPSLQKTTSSSEG). Residues 159–221 (QQMLNEQEES…DHAKNRLNKV (63 aa)) enclose the t-SNARE coiled-coil homology domain.

It localises to the golgi apparatus membrane. Its subcellular location is the prevacuolar compartment membrane. In terms of biological role, involved in vesicle-mediated protein transport between the Golgi and the vacuole. The chain is Syntaxin-like protein fsv1 (fsv1) from Schizosaccharomyces pombe (strain 972 / ATCC 24843) (Fission yeast).